The following is a 1254-amino-acid chain: AF4/FMR2 family member 3 (1254 aa).

Basic and acidic residues predominate over residues 45–62; the sequence is YEPDRNALRRKERERRSQ. Disordered regions lie at residues 45-90, 139-190, 261-324, 350-534, and 552-752; these read YEPD…GDEL, AESR…AAQQ, RPMD…GENN, EPSK…EGQD, and KTTC…SVGS. Polar residues-rich tracts occupy residues 67–76 and 143–158; these read DSGSFNSGYS and AQPQPSTVCSTASSTP. Polar residues predominate over residues 359–369; it reads KDSQLVSSGHS. The span at 406-418 shows a compositional bias: low complexity; it reads QQAAQRTALRALA. A compositionally biased stretch (polar residues) spans 421–433; it reads SVVQQTNCRGSAP. The span at 441–472 shows a compositional bias: low complexity; sequence SSSSGGSSSSSDSESTSGSDSETESSSSSSES. Residues 552–561 show a composition bias toward basic and acidic residues; sequence KTTCKEEQRP. A compositionally biased stretch (low complexity) spans 577–605; that stretch reads SPPAAVAVTAAALPPAVPSAPTESAPAPT. The span at 615–633 shows a compositional bias: basic and acidic residues; sequence RRTERTSAGDGANCHRPEE. Low complexity-rich tracts occupy residues 694–704 and 732–749; these read TESSSSSSSSD and AASSNNNSNSNSSTSRAS. Ser-782 carries the phosphoserine modification. The disordered stretch occupies residues 813-883; sequence PGVLSAPSAK…ASTNNTLSGN (71 aa). Basic and acidic residues predominate over residues 857–869; it reads REIKKVQGRKESA. A compositionally biased stretch (polar residues) spans 873 to 883; it reads AASTNNTLSGN. Ser-908 carries the phosphoserine modification. 2 disordered regions span residues 919-991 and 1128-1171; these read ASED…HRDC and AAQA…SGLS. Polar residues-rich tracts occupy residues 922–941 and 960–985; these read DLTSSSRPHGNGLLTSASSN and ASHNSSENGTLHSKSRPQTEPWSPGS. Composition is skewed to low complexity over residues 1132–1146 and 1154–1171; these read PSPWGSSGKSTGSPS and PASSVGSQGSLSSSSGLS.

This sequence belongs to the AF4 family. As to expression, highest levels found in lymphoid tissues, lower levels in brain and lung.

The protein localises to the nucleus. Functionally, putative transcription activator that may function in lymphoid development and oncogenesis. The polypeptide is AF4/FMR2 family member 3 (Aff3) (Mus musculus (Mouse)).